The sequence spans 259 residues: Adenosylcobinamide-GDP ribazoletransferase (259 aa).

Helical transmembrane passes span 9–29 (NLFF…WIEV), 43–63 (LVGL…LYWV), 64–84 (SPSV…GGFH), 118–138 (ALAL…LALF), 143–163 (VSLA…SFIF), and 196–216 (VLAL…GLVI).

The protein belongs to the CobS family. Mg(2+) serves as cofactor.

The protein resides in the cell inner membrane. It carries out the reaction alpha-ribazole + adenosylcob(III)inamide-GDP = adenosylcob(III)alamin + GMP + H(+). The catalysed reaction is alpha-ribazole 5'-phosphate + adenosylcob(III)inamide-GDP = adenosylcob(III)alamin 5'-phosphate + GMP + H(+). Its pathway is cofactor biosynthesis; adenosylcobalamin biosynthesis; adenosylcobalamin from cob(II)yrinate a,c-diamide: step 7/7. Functionally, joins adenosylcobinamide-GDP and alpha-ribazole to generate adenosylcobalamin (Ado-cobalamin). Also synthesizes adenosylcobalamin 5'-phosphate from adenosylcobinamide-GDP and alpha-ribazole 5'-phosphate. The chain is Adenosylcobinamide-GDP ribazoletransferase from Shewanella halifaxensis (strain HAW-EB4).